The chain runs to 142 residues: Large ribosomal subunit protein uL13 (142 aa).

It belongs to the universal ribosomal protein uL13 family. In terms of assembly, part of the 50S ribosomal subunit.

This protein is one of the early assembly proteins of the 50S ribosomal subunit, although it is not seen to bind rRNA by itself. It is important during the early stages of 50S assembly. This chain is Large ribosomal subunit protein uL13, found in Aeromonas salmonicida (strain A449).